Reading from the N-terminus, the 33-residue chain is Gastrin (33 aa).

The tract at residues 1–21 (ELEPQGPPHLGTDLSKKQGPW) is disordered. The residue at position 18 (Gln18) is a Pyrrolidone carboxylic acid. Sulfotyrosine is present on Tyr28. The residue at position 33 (Phe33) is a Phenylalanine amide.

It belongs to the gastrin/cholecystokinin family.

The protein resides in the secreted. Gastrin stimulates the stomach mucosa to produce and secrete hydrochloric acid and the pancreas to secrete its digestive enzymes. It also stimulates smooth muscle contraction and increases blood circulation and water secretion in the stomach and intestine. In Chinchilla chinchilla (Short-tailed chinchilla), this protein is Gastrin (GAST).